The chain runs to 719 residues: DNA ligase (719 aa).

NAD(+)-binding positions include 42-46 (DAAYD), 92-93 (SL), and Glu-126. Lys-128 (N6-AMP-lysine intermediate) is an active-site residue. The NAD(+) site is built by Arg-149, Glu-185, Lys-301, and Lys-325. Zn(2+) is bound by residues Cys-430, Cys-433, Cys-448, and Cys-454. Residues 640–719 (ATGSPVEGKT…DDWFKLVGED (80 aa)) form the BRCT domain.

It belongs to the NAD-dependent DNA ligase family. LigA subfamily. Requires Mg(2+) as cofactor. It depends on Mn(2+) as a cofactor.

It carries out the reaction NAD(+) + (deoxyribonucleotide)n-3'-hydroxyl + 5'-phospho-(deoxyribonucleotide)m = (deoxyribonucleotide)n+m + AMP + beta-nicotinamide D-nucleotide.. Its function is as follows. DNA ligase that catalyzes the formation of phosphodiester linkages between 5'-phosphoryl and 3'-hydroxyl groups in double-stranded DNA using NAD as a coenzyme and as the energy source for the reaction. It is essential for DNA replication and repair of damaged DNA. The sequence is that of DNA ligase from Brucella melitensis biotype 1 (strain ATCC 23456 / CCUG 17765 / NCTC 10094 / 16M).